The chain runs to 475 residues: Aspartyl/glutamyl-tRNA(Asn/Gln) amidotransferase subunit B (475 aa).

Belongs to the GatB/GatE family. GatB subfamily. In terms of assembly, heterotrimer of A, B and C subunits.

The enzyme catalyses L-glutamyl-tRNA(Gln) + L-glutamine + ATP + H2O = L-glutaminyl-tRNA(Gln) + L-glutamate + ADP + phosphate + H(+). The catalysed reaction is L-aspartyl-tRNA(Asn) + L-glutamine + ATP + H2O = L-asparaginyl-tRNA(Asn) + L-glutamate + ADP + phosphate + 2 H(+). Functionally, allows the formation of correctly charged Asn-tRNA(Asn) or Gln-tRNA(Gln) through the transamidation of misacylated Asp-tRNA(Asn) or Glu-tRNA(Gln) in organisms which lack either or both of asparaginyl-tRNA or glutaminyl-tRNA synthetases. The reaction takes place in the presence of glutamine and ATP through an activated phospho-Asp-tRNA(Asn) or phospho-Glu-tRNA(Gln). The sequence is that of Aspartyl/glutamyl-tRNA(Asn/Gln) amidotransferase subunit B from Hydrogenovibrio crunogenus (strain DSM 25203 / XCL-2) (Thiomicrospira crunogena).